We begin with the raw amino-acid sequence, 316 residues long: Serine protease 45 (316 aa).

Residues 1–38 (MAASLSRLSAGLAASRPLGLSRSFLLLVLLLLNSGYKG) form the signal peptide. One can recognise a Peptidase S1 domain in the interval 49–290 (WWPKNLDLSR…YSRWIKKQIS (242 aa)). C74 and C90 are disulfide-bonded. H89 serves as the catalytic Charge relay system. Residue N110 is glycosylated (N-linked (GlcNAc...) asparagine). D137 serves as the catalytic Charge relay system. N-linked (GlcNAc...) asparagine glycosylation is found at N162 and N186. Intrachain disulfides connect C171–C248, C206–C229, and C238–C266. S242 serves as the catalytic Charge relay system.

The protein belongs to the peptidase S1 family.

It localises to the secreted. In Bos taurus (Bovine), this protein is Serine protease 45 (PRSS45).